The primary structure comprises 511 residues: Apolipoprotein N-acyltransferase (511 aa).

6 helical membrane-spanning segments follow: residues 7–29 (PGWP…LAPF), 58–78 (GWWY…VSIH), 90–110 (LLML…AWLW), 125–145 (LAFA…LTGF), 163–183 (VPVG…ALLV), and 192–212 (GASL…GLYL). The region spanning 230–470 (IQGNIAQELK…QGILRGEVIP (241 aa)) is the CN hydrolase domain. Glutamate 269 serves as the catalytic Proton acceptor. Residue lysine 330 is part of the active site. Catalysis depends on cysteine 382, which acts as the Nucleophile. The chain crosses the membrane as a helical span at residues 482–502 (VWPLAGLAGVLLLWALLGRQL).

The protein belongs to the CN hydrolase family. Apolipoprotein N-acyltransferase subfamily.

It localises to the cell inner membrane. The enzyme catalyses N-terminal S-1,2-diacyl-sn-glyceryl-L-cysteinyl-[lipoprotein] + a glycerophospholipid = N-acyl-S-1,2-diacyl-sn-glyceryl-L-cysteinyl-[lipoprotein] + a 2-acyl-sn-glycero-3-phospholipid + H(+). Its pathway is protein modification; lipoprotein biosynthesis (N-acyl transfer). In terms of biological role, catalyzes the phospholipid dependent N-acylation of the N-terminal cysteine of apolipoprotein, the last step in lipoprotein maturation. The sequence is that of Apolipoprotein N-acyltransferase from Pseudomonas aeruginosa (strain ATCC 15692 / DSM 22644 / CIP 104116 / JCM 14847 / LMG 12228 / 1C / PRS 101 / PAO1).